Reading from the N-terminus, the 420-residue chain is Histidine--tRNA ligase (420 aa).

It belongs to the class-II aminoacyl-tRNA synthetase family. In terms of assembly, homodimer.

The protein resides in the cytoplasm. It catalyses the reaction tRNA(His) + L-histidine + ATP = L-histidyl-tRNA(His) + AMP + diphosphate + H(+). The polypeptide is Histidine--tRNA ligase (Ureaplasma parvum serovar 3 (strain ATCC 27815 / 27 / NCTC 11736)).